The primary structure comprises 545 residues: CTP synthase (545 aa).

Residues 1–266 (MTTKYIFVTG…DSYFTERFGL (266 aa)) are amidoligase domain. Ser14 lines the CTP pocket. Ser14 is a binding site for UTP. ATP contacts are provided by residues 15–20 (SLGKGI) and Asp72. Mg(2+) is bound by residues Asp72 and Glu140. CTP contacts are provided by residues 147–149 (DIE), 187–192 (KTKPTQ), and Lys223. Residues 187 to 192 (KTKPTQ) and Lys223 contribute to the UTP site. 239-241 (KDV) is an ATP binding site. Residues 291–542 (TIGMVGKYVS…VKAAGEYQKR (252 aa)) form the Glutamine amidotransferase type-1 domain. Gly352 is an L-glutamine binding site. Cys379 serves as the catalytic Nucleophile; for glutamine hydrolysis. Residues 380 to 383 (LGMQ), Glu403, and Arg470 each bind L-glutamine. Residues His515 and Glu517 contribute to the active site.

This sequence belongs to the CTP synthase family. In terms of assembly, homotetramer.

It carries out the reaction UTP + L-glutamine + ATP + H2O = CTP + L-glutamate + ADP + phosphate + 2 H(+). The catalysed reaction is L-glutamine + H2O = L-glutamate + NH4(+). It catalyses the reaction UTP + NH4(+) + ATP = CTP + ADP + phosphate + 2 H(+). It participates in pyrimidine metabolism; CTP biosynthesis via de novo pathway; CTP from UDP: step 2/2. With respect to regulation, allosterically activated by GTP, when glutamine is the substrate; GTP has no effect on the reaction when ammonia is the substrate. The allosteric effector GTP functions by stabilizing the protein conformation that binds the tetrahedral intermediate(s) formed during glutamine hydrolysis. Inhibited by the product CTP, via allosteric rather than competitive inhibition. Functionally, catalyzes the ATP-dependent amination of UTP to CTP with either L-glutamine or ammonia as the source of nitrogen. Regulates intracellular CTP levels through interactions with the four ribonucleotide triphosphates. In Aeromonas hydrophila subsp. hydrophila (strain ATCC 7966 / DSM 30187 / BCRC 13018 / CCUG 14551 / JCM 1027 / KCTC 2358 / NCIMB 9240 / NCTC 8049), this protein is CTP synthase.